Here is an 817-residue protein sequence, read N- to C-terminus: Lon protease 1 (817 aa).

Residues 18–216 (VPLLPLRDII…KLYELMQGEI (199 aa)) enclose the Lon N-terminal domain. 368 to 375 (GPPGVGKT) is a binding site for ATP. Residues 604–785 (EDQVGIVTGL…DDVLREALVL (182 aa)) form the Lon proteolytic domain. Active-site residues include Ser-691 and Lys-734. The tract at residues 789-817 (EEFGRKPTTDGGKLGGTTELPASPAVAPA) is disordered.

It belongs to the peptidase S16 family. In terms of assembly, homohexamer. Organized in a ring with a central cavity.

The protein localises to the cytoplasm. It carries out the reaction Hydrolysis of proteins in presence of ATP.. Its function is as follows. ATP-dependent serine protease that mediates the selective degradation of mutant and abnormal proteins as well as certain short-lived regulatory proteins. Required for cellular homeostasis and for survival from DNA damage and developmental changes induced by stress. Degrades polypeptides processively to yield small peptide fragments that are 5 to 10 amino acids long. Binds to DNA in a double-stranded, site-specific manner. This Myxococcus xanthus protein is Lon protease 1.